The following is a 245-amino-acid chain: MKFDILTLFPAMFEGPLTESIIRRAVEKGLLDIRLHQIRDFATDRHKVVDDAPYGGGDGMVMKVEPIAACLEAVKAERPKARVLLTSPRGRLFDNAAARELAQEQEVIIICGRYEGIDERVRELFVEDEFSIGDFVLTGGELAAMVMIDATVRFVPGVLGSPGSAETDTFSDGLLEYPHYTRPAEFRGHSVPAVLLSGNHAEVARWRRRKALEETIRSRPDLLEKAVLDSDDRRYLLELEEGASK.

S-adenosyl-L-methionine is bound by residues Gly112 and 132–137 (IGDFVL).

Belongs to the RNA methyltransferase TrmD family. Homodimer.

It localises to the cytoplasm. It carries out the reaction guanosine(37) in tRNA + S-adenosyl-L-methionine = N(1)-methylguanosine(37) in tRNA + S-adenosyl-L-homocysteine + H(+). Functionally, specifically methylates guanosine-37 in various tRNAs. The polypeptide is tRNA (guanine-N(1)-)-methyltransferase (Geobacter metallireducens (strain ATCC 53774 / DSM 7210 / GS-15)).